Here is a 238-residue protein sequence, read N- to C-terminus: 3-dehydroquinate dehydratase (238 aa).

3-dehydroquinate-binding positions include 35 to 37 and R70; that span reads ELR. H133 acts as the Proton donor/acceptor in catalysis. The active-site Schiff-base intermediate with substrate is K160. Positions 202 and 225 each coordinate 3-dehydroquinate.

The protein belongs to the type-I 3-dehydroquinase family. In terms of assembly, homodimer.

The catalysed reaction is 3-dehydroquinate = 3-dehydroshikimate + H2O. It participates in metabolic intermediate biosynthesis; chorismate biosynthesis; chorismate from D-erythrose 4-phosphate and phosphoenolpyruvate: step 3/7. Its function is as follows. Involved in the third step of the chorismate pathway, which leads to the biosynthesis of aromatic amino acids. Catalyzes the cis-dehydration of 3-dehydroquinate (DHQ) and introduces the first double bond of the aromatic ring to yield 3-dehydroshikimate. The chain is 3-dehydroquinate dehydratase from Staphylococcus aureus (strain MSSA476).